A 227-amino-acid chain; its full sequence is PKHD-type hydroxylase BURPS668_A1690 (227 aa).

Positions 78–178 (KVFPPLFNRY…RVASFFWIQS (101 aa)) constitute a Fe2OG dioxygenase domain. Fe cation-binding residues include histidine 96, aspartate 98, and histidine 159. Residue arginine 169 participates in 2-oxoglutarate binding.

Fe(2+) serves as cofactor. L-ascorbate is required as a cofactor.

This Burkholderia pseudomallei (strain 668) protein is PKHD-type hydroxylase BURPS668_A1690.